Reading from the N-terminus, the 155-residue chain is Ribosomal RNA large subunit methyltransferase H (155 aa).

Residues Leu-72, Gly-103, and 122–127 contribute to the S-adenosyl-L-methionine site; that span reads LSALTL.

The protein belongs to the RNA methyltransferase RlmH family. As to quaternary structure, homodimer.

It localises to the cytoplasm. The catalysed reaction is pseudouridine(1915) in 23S rRNA + S-adenosyl-L-methionine = N(3)-methylpseudouridine(1915) in 23S rRNA + S-adenosyl-L-homocysteine + H(+). Functionally, specifically methylates the pseudouridine at position 1915 (m3Psi1915) in 23S rRNA. The chain is Ribosomal RNA large subunit methyltransferase H from Cronobacter sakazakii (strain ATCC BAA-894) (Enterobacter sakazakii).